Consider the following 232-residue polypeptide: UPF0502 protein mma_2112 (232 aa).

Belongs to the UPF0502 family.

This Janthinobacterium sp. (strain Marseille) (Minibacterium massiliensis) protein is UPF0502 protein mma_2112.